The primary structure comprises 76 residues: UPF0270 protein PSPA7_1664 (76 aa).

This sequence belongs to the UPF0270 family.

This Pseudomonas paraeruginosa (strain DSM 24068 / PA7) (Pseudomonas aeruginosa (strain PA7)) protein is UPF0270 protein PSPA7_1664.